A 242-amino-acid polypeptide reads, in one-letter code: 4-hydroxy-tetrahydrodipicolinate reductase (242 aa).

Residues 8–13, 75–77, and 99–102 contribute to the NAD(+) site; these read GSNGRM, GTT, and ATNM. The active-site Proton donor/acceptor is the His131. (S)-2,3,4,5-tetrahydrodipicolinate is bound at residue His132. The Proton donor role is filled by Lys135. 141–142 contributes to the (S)-2,3,4,5-tetrahydrodipicolinate binding site; that stretch reads GT.

Belongs to the DapB family.

The protein resides in the cytoplasm. The catalysed reaction is (S)-2,3,4,5-tetrahydrodipicolinate + NAD(+) + H2O = (2S,4S)-4-hydroxy-2,3,4,5-tetrahydrodipicolinate + NADH + H(+). It carries out the reaction (S)-2,3,4,5-tetrahydrodipicolinate + NADP(+) + H2O = (2S,4S)-4-hydroxy-2,3,4,5-tetrahydrodipicolinate + NADPH + H(+). The protein operates within amino-acid biosynthesis; L-lysine biosynthesis via DAP pathway; (S)-tetrahydrodipicolinate from L-aspartate: step 4/4. In terms of biological role, catalyzes the conversion of 4-hydroxy-tetrahydrodipicolinate (HTPA) to tetrahydrodipicolinate. The protein is 4-hydroxy-tetrahydrodipicolinate reductase of Campylobacter lari (strain RM2100 / D67 / ATCC BAA-1060).